A 141-amino-acid chain; its full sequence is Ly6/PLAUR domain-containing protein 1 (141 aa).

The N-terminal stretch at 1 to 20 (MWVLGIAATFCGLFLLPGFA) is a signal peptide. Cystine bridges form between Cys-25–Cys-54, Cys-28–Cys-37, Cys-46–Cys-71, Cys-77–Cys-100, Cys-88–Cys-97, and Cys-101–Cys-106. The 83-residue stretch at 25-107 (CYQCEEFQLN…ISCCNTPLCN (83 aa)) folds into the UPAR/Ly6 domain. Asn-45 carries N-linked (GlcNAc...) asparagine glycosylation. A lipid anchor (GPI-anchor amidated serine) is attached at Ser-117. Positions 118-141 (ASALRPGLRTTILFLKLALFSAHC) are cleaved as a propeptide — removed in mature form.

As to quaternary structure, interacts with CHRNA4 and nAChRs containing alpha-4:beta-2 (CHRNA4:CHRNB2) and alpha-7 (CHRNA7) subunits.

It localises to the cell membrane. In terms of biological role, believed to act as a modulator of nicotinic acetylcholine receptors (nAChRs) activity. In vitro increases receptor desensitization and decreases affinity for ACh of alpha-4:beta-2-containing nAChRs. May play a role in the intracellular trafficking of alpha-4:beta-2 and alpha-7-containing nAChRs and may inhibit their expression at the cell surface. May be involved in the control of anxiety. This is Ly6/PLAUR domain-containing protein 1 (LYPD1) from Homo sapiens (Human).